Here is an 852-residue protein sequence, read N- to C-terminus: Zinc finger and SCAN domain-containing protein 29 (852 aa).

The SCAN box domain occupies 18 to 100 (RQRFRRFHYQ…TLVEDLEREP (83 aa)). 3 disordered regions span residues 96–182 (LERE…PKSG), 347–400 (ASHS…SAAP), and 502–557 (PNDG…RAPV). Residue K112 forms a Glycyl lysine isopeptide (Lys-Gly) (interchain with G-Cter in SUMO2) linkage. S153 carries the phosphoserine modification. K180 is covalently cross-linked (Glycyl lysine isopeptide (Lys-Gly) (interchain with G-Cter in SUMO2)). Over residues 508–517 (ETASCPVQGT) the composition is skewed to polar residues. Acidic residues predominate over residues 528–545 (EADEATEEDSDDDEEDTE). Residue S561 is modified to Phosphoserine. K576 participates in a covalent cross-link: Glycyl lysine isopeptide (Lys-Gly) (interchain with G-Cter in SUMO2). The tract at residues 603 to 625 (QGKGNESDCRSGRQWAKTSGEKR) is disordered. K652 is covalently cross-linked (Glycyl lysine isopeptide (Lys-Gly) (interchain with G-Cter in SUMO2)). 6 consecutive C2H2-type zinc fingers follow at residues 678–700 (YKCA…RRIH), 706–728 (YKCL…RRIH), 734–756 (YQCG…QRTH), 762–784 (YQCE…RRIH), 790–812 (HVCP…HRTH), and 818–840 (YGCH…GEIH).

This sequence belongs to the krueppel C2H2-type zinc-finger protein family.

The protein localises to the nucleus. Functionally, may be involved in transcriptional regulation. This is Zinc finger and SCAN domain-containing protein 29 (ZSCAN29) from Homo sapiens (Human).